The following is a 306-amino-acid chain: Follistatin-related protein 1 (306 aa).

The N-terminal stretch at 1–18 (MWKRWLALSLVTIALVHG) is a signal peptide. One can recognise a Follistatin-like domain in the interval 28 to 51 (ICANVFCGAGRECAVTEKGEPTCL). Disulfide bonds link Cys-29-Cys-40, Cys-34-Cys-50, Cys-52-Cys-82, Cys-56-Cys-75, and Cys-64-Cys-96. One can recognise a Kazal-like domain in the interval 46-98 (GEPTCLCIEQCKPHKRPVCGSNGKTYLNHCELHRDACLTGSKIQVDYDGHCKE). Asn-142 carries an N-linked (GlcNAc...) asparagine glycan. Residues 142 to 176 (NYSEILDKYFKSFDNGDSHLDSSEFLKFVEQNETA) enclose the EF-hand 1 domain. Ser-163 carries the phosphoserine modification. Asn-173 and Asn-178 each carry an N-linked (GlcNAc...) asparagine glycan. An EF-hand 2 domain is found at 191 to 226 (LRSLCVDALIELSDENADWKLSFQEFLKCLNPSFNP). Residues 231–285 (CALEDETYADGAETEVDCNRCVCSCGHWVCTAMTCDGKNQKGVQTHTEEEKTGYV) form the VWFC domain.

In terms of assembly, homodimer. Interacts with SCN10A. Interacts with DIP2A; DIP2A may act as a cell surface receptor for FSTL1. Interacts with BMP4. Interacts with CD14; this interaction promotes TL4-mediated signaling cascade. In terms of tissue distribution, during central nervous system development, strongly expressed in the telencephalon, diencephalon, brainstem, limbic system and spinal cord. Widely expressed in all organs.

It is found in the secreted. Functionally, secreted glycoprotein that is involved in various physiological processes, such as angiogenesis, regulation of the immune response, cell proliferation and differentiation. Plays a role in the development of the central nervous system, skeletal system, lungs, and ureter. Promotes endothelial cell survival, migration and differentiation into network structures in an AKT-dependent manner. Also promotes survival of cardiac myocytes. Initiates various signaling cascades by activating different receptors on the cell surface such as DIP2A, TLR4 or BMP receptors. This chain is Follistatin-related protein 1 (Fstl1), found in Mus musculus (Mouse).